A 487-amino-acid polypeptide reads, in one-letter code: DNA ligase (487 aa).

The active-site N6-AMP-lysine intermediate is the Lys-159. The ATP site is built by Arg-164, Arg-182, and Glu-217. Glu-217 lines the a divalent metal cation pocket. The tract at residues 229–237 is interaction with the sliding clamp; that stretch reads EGLDFLFDA. Glu-344 provides a ligand contact to a divalent metal cation. Residues Arg-359 and Lys-365 each coordinate ATP.

Belongs to the ATP-dependent DNA ligase family. Interacts with the sliding clamp. The cofactor is a divalent metal cation.

The catalysed reaction is ATP + (deoxyribonucleotide)n-3'-hydroxyl + 5'-phospho-(deoxyribonucleotide)m = (deoxyribonucleotide)n+m + AMP + diphosphate.. DNA ligase, which is expressed in the early stage of lytic development, has been implicated in T4 DNA synthesis and genetic recombination. It may also play a role in T4 DNA repair. The polypeptide is DNA ligase (30) (Escherichia coli (Bacteriophage T6)).